A 320-amino-acid polypeptide reads, in one-letter code: Small ribosomal subunit protein uS2 (320 aa).

Over residues 1–22 the composition is skewed to acidic residues; the sequence is MADETTTDTPDVQDEDAPDEDA. Residues 1-83 are disordered; the sequence is MADETTTDTP…SSSEEETSHR (83 aa). A compositionally biased stretch (low complexity) spans 27–41; sequence DDTASDSTGEAAAAD. Acidic residues-rich tracts occupy residues 42–57 and 65–78; these read TDAD…EDAP and DDGD…SSEE.

Belongs to the universal ribosomal protein uS2 family.

The chain is Small ribosomal subunit protein uS2 from Salinibacter ruber (strain DSM 13855 / M31).